The following is a 286-amino-acid chain: Bifunctional protein FolD (286 aa).

NADP(+) contacts are provided by residues 163–165 (GMS), Ile188, and Ile229.

Belongs to the tetrahydrofolate dehydrogenase/cyclohydrolase family. As to quaternary structure, homodimer.

It carries out the reaction (6R)-5,10-methylene-5,6,7,8-tetrahydrofolate + NADP(+) = (6R)-5,10-methenyltetrahydrofolate + NADPH. The catalysed reaction is (6R)-5,10-methenyltetrahydrofolate + H2O = (6R)-10-formyltetrahydrofolate + H(+). Its pathway is one-carbon metabolism; tetrahydrofolate interconversion. Functionally, catalyzes the oxidation of 5,10-methylenetetrahydrofolate to 5,10-methenyltetrahydrofolate and then the hydrolysis of 5,10-methenyltetrahydrofolate to 10-formyltetrahydrofolate. In Helicobacter hepaticus (strain ATCC 51449 / 3B1), this protein is Bifunctional protein FolD.